Reading from the N-terminus, the 789-residue chain is Probable phosphoketolase (789 aa).

It belongs to the XFP family. Thiamine diphosphate serves as cofactor.

This Brucella abortus (strain 2308) protein is Probable phosphoketolase.